A 750-amino-acid chain; its full sequence is MTQNLPQPPAVNAPENELDLVRYLDVLVANRWLIAGIAAAVMLLGAAYAFLARPVYEADIMVQVEDNPNSAKSLLGDVSSLFDVKTDANAEIEILRSRMVVGKAVDNLHLYITAKPRYFPLIGAWISSRATRLSEPGLFGLGGYVWGTESIDVDGFDVPEALEGQPFKLIVLGNGRYRLENKSLDAPIEGVVGEPLEAKQSIGTIQLQVNNLTAKAGATFELERDSRLKTMEMLQDKLKIAEKGKQSGIIGASLDGTNPALTAAIMNQIATEYVAQNIKRKAEEAERSLVFLDGLLPQLKLELERAEMKYNEMRNLRGTFDLSEEGKAFLQESVTVETSLQELKQKRAELLTRFTSSHPGVQAIDQQISVMSGKVNSMTRRLKSLPNIEQDTVRLMRDVQVDNELYVSLLNDMQQLKLVKAGKVGNVRLVDGAAVPEEPVKPKKLTVTPLAGVLGVVLGVMAAFVRNALFGGITDPQDIEEHTGLSVYATVPLSDTQVDLSGQLTTRKRGQYLLARRVPDDPSIEALRSLRTALQFAMQDAGNNLVVLTGPTPGVGKSFVSANLAAVIATGGKRVLLIDADMRKGYLHQYFGKDRKPGLLDLLAGNRSIEQVVHREVVPGLDFIATGLFPHNPSELLLNPRMVELMDTFRSQYDLVLVDTPPVLAVADTAILAARAGLVLLVTRFERSTLGEIRETIKQLQHANVDVRGVVFNALDPNTYRYGYGSRYGRYRYVQYGYTSNSKPPEAESA.

Topologically, residues 1-31 are cytoplasmic; that stretch reads MTQNLPQPPAVNAPENELDLVRYLDVLVANR. The chain crosses the membrane as a helical span at residues 32–52; it reads WLIAGIAAAVMLLGAAYAFLA. Residues 53-444 lie on the Periplasmic side of the membrane; it reads RPVYEADIMV…VPEEPVKPKK (392 aa). The chain crosses the membrane as a helical span at residues 445–465; it reads LTVTPLAGVLGVVLGVMAAFV. Residues 466–750 lie on the Cytoplasmic side of the membrane; sequence RNALFGGITD…NSKPPEAESA (285 aa).

The protein belongs to the etk/wzc family.

It localises to the cell inner membrane. It catalyses the reaction L-tyrosyl-[protein] + ATP = O-phospho-L-tyrosyl-[protein] + ADP + H(+). Probably involved in polymerization and/or export of exopolysaccharide EPS I which functions as a virulence factor. May be involved in an ATP-dependent process in the pathway for EPS I production, possibly export of the trimeric repeat units across the inner membrane or their polymerization. This chain is Putative tyrosine-protein kinase EpsB (epsB), found in Ralstonia solanacearum (Pseudomonas solanacearum).